Consider the following 547-residue polypeptide: Glucose-6-phosphate isomerase (547 aa).

The active-site Proton donor is the E351. Residues H382 and K509 contribute to the active site.

It belongs to the GPI family.

It is found in the cytoplasm. The catalysed reaction is alpha-D-glucose 6-phosphate = beta-D-fructose 6-phosphate. It participates in carbohydrate biosynthesis; gluconeogenesis. It functions in the pathway carbohydrate degradation; glycolysis; D-glyceraldehyde 3-phosphate and glycerone phosphate from D-glucose: step 2/4. In terms of biological role, catalyzes the reversible isomerization of glucose-6-phosphate to fructose-6-phosphate. This is Glucose-6-phosphate isomerase from Coxiella burnetii (strain CbuG_Q212) (Coxiella burnetii (strain Q212)).